Reading from the N-terminus, the 481-residue chain is MVGPRTRGYAIHKLGFCSVVMLGINSIIGAGIFLTPGEVIGLAGPFAPMAYVLAGIFAGVVAIVFATAARYVRTNGASYAYTTAAFGRRIGIYVGVTHAITASIAWGVLASFFVSTLLRVAFPDKAWADAEQLFSVKTLTFLGFIGVLLAINLFGNRAIKWANGTSTVGKAFALSAFIVGGLWIITTQHVNNYATAWSAYSATPYSLLGVAEIGKGTFSSMALATIVALYAFTGFESIANAAEEMDAPDRNLPRAIPIAIFSVGAIYLLTLTVAMLLGSNKIAASGDTVKLAAAIGNATFRTIIVVGALISMFGINVAASFGAPRLWTALADSGVLPTRLSRKNQYDVPMVSFAITASLALAFPLALRFDNLHLTGLAVIARFVQFIIVPIALIALARSQAVEHAAVRRNAFTDKVLPLVAIVVSVGLAVSYDYRCIFLVRGGPNYFSIALIVITFIVVPAMAYLHYYRIIRRVGDRPSTR.

Transmembrane regions (helical) follow at residues 14–34 (LGFC…GIFL), 46–66 (FAPM…IVFA), 90–110 (IGIY…GVLA), 134–154 (FSVK…INLF), 167–187 (TVGK…IITT), 218–238 (FSSM…FESI), 258–278 (IAIF…MLLG), 303–323 (IIVV…SFGA), 377–397 (LAVI…IALA), 411–431 (AFTD…LAVS), and 446–466 (YFSI…AYLH).

It belongs to the amino acid-polyamine-organocation (APC) superfamily.

It localises to the cell membrane. Functionally, probable amino-acid or metabolite transport protein. This is an uncharacterized protein from Mycobacterium bovis (strain ATCC BAA-935 / AF2122/97).